Reading from the N-terminus, the 133-residue chain is Sporulation-specific protein 2 (133 aa).

The protein belongs to the VPS13 family. As to quaternary structure, interacts with spo13 and spo15.

It is found in the cytoplasm. The protein resides in the cytoskeleton. The protein localises to the microtubule organizing center. Its subcellular location is the spindle pole body. Its function is as follows. Involved in sporulation. Plays a significant role in modification of the spindle pole body prior to spore formation and is required for initiating forespore membrane formation. Assists in the localization of spo13 to the outer surface of the SPB. The protein is Sporulation-specific protein 2 (spo2) of Schizosaccharomyces pombe (strain 972 / ATCC 24843) (Fission yeast).